We begin with the raw amino-acid sequence, 475 residues long: Bifunctional protein HldE (475 aa).

The segment at 1–317 is ribokinase; sequence MQYSAQFNRA…ENAIHGRTTA (317 aa). 194–197 is a binding site for ATP; the sequence is NMSE. The active site involves D263. The segment at 343 to 475 is cytidylyltransferase; that stretch reads MTNGCFDILH…VIKKIQQLKE (133 aa).

It in the N-terminal section; belongs to the carbohydrate kinase PfkB family. In the C-terminal section; belongs to the cytidylyltransferase family. In terms of assembly, homodimer.

The enzyme catalyses D-glycero-beta-D-manno-heptose 7-phosphate + ATP = D-glycero-beta-D-manno-heptose 1,7-bisphosphate + ADP + H(+). It carries out the reaction D-glycero-beta-D-manno-heptose 1-phosphate + ATP + H(+) = ADP-D-glycero-beta-D-manno-heptose + diphosphate. The protein operates within nucleotide-sugar biosynthesis; ADP-L-glycero-beta-D-manno-heptose biosynthesis; ADP-L-glycero-beta-D-manno-heptose from D-glycero-beta-D-manno-heptose 7-phosphate: step 1/4. It participates in nucleotide-sugar biosynthesis; ADP-L-glycero-beta-D-manno-heptose biosynthesis; ADP-L-glycero-beta-D-manno-heptose from D-glycero-beta-D-manno-heptose 7-phosphate: step 3/4. Catalyzes the phosphorylation of D-glycero-D-manno-heptose 7-phosphate at the C-1 position to selectively form D-glycero-beta-D-manno-heptose-1,7-bisphosphate. Functionally, catalyzes the ADP transfer from ATP to D-glycero-beta-D-manno-heptose 1-phosphate, yielding ADP-D-glycero-beta-D-manno-heptose. This is Bifunctional protein HldE from Histophilus somni (strain 129Pt) (Haemophilus somnus).